The primary structure comprises 284 residues: Orotidine 5'-phosphate decarboxylase (284 aa).

K95 serves as the catalytic Proton donor.

It belongs to the OMP decarboxylase family. Type 2 subfamily.

The catalysed reaction is orotidine 5'-phosphate + H(+) = UMP + CO2. The protein operates within pyrimidine metabolism; UMP biosynthesis via de novo pathway; UMP from orotate: step 2/2. This is Orotidine 5'-phosphate decarboxylase from Leptothrix cholodnii (strain ATCC 51168 / LMG 8142 / SP-6) (Leptothrix discophora (strain SP-6)).